The sequence spans 517 residues: Alpha,alpha-trehalose-phosphate synthase [UDP-forming] 1 (517 aa).

D-glucose 6-phosphate is bound by residues Y98 and D152. The UDP site is built by R288 and K293. UDP-alpha-D-glucose contacts are provided by R288 and K293. R326 provides a ligand contact to D-glucose 6-phosphate. 387 to 395 (DGMNLVAYE) is a UDP-alpha-D-glucose binding site. 391–395 (LVAYE) lines the UDP pocket. Positions 486-517 (FHAKKASFSDNNSENGEPSNGVETPAQEQVAQ) are disordered. Residues 493–517 (FSDNNSENGEPSNGVETPAQEQVAQ) are compositionally biased toward polar residues.

This sequence belongs to the glycosyltransferase 20 family.

It carries out the reaction D-glucose 6-phosphate + UDP-alpha-D-glucose = alpha,alpha-trehalose 6-phosphate + UDP + H(+). It functions in the pathway carbohydrate biosynthesis. Functionally, synthase catalytic subunit of the trehalose synthase complex that catalyzes the production of trehalose from glucose-6-phosphate and UDP-alpha-D-glucose in a two step process. This chain is Alpha,alpha-trehalose-phosphate synthase [UDP-forming] 1, found in Aspergillus niger.